The chain runs to 77 residues: DNA-directed RNA polymerase subunit epsilon (77 aa).

It belongs to the RNA polymerase subunit epsilon family. In terms of assembly, RNAP is composed of a core of 2 alpha, a beta and a beta' subunit. The core is associated with a delta subunit, and at least one of epsilon or omega. When a sigma factor is associated with the core the holoenzyme is formed, which can initiate transcription.

It catalyses the reaction RNA(n) + a ribonucleoside 5'-triphosphate = RNA(n+1) + diphosphate. In terms of biological role, a non-essential component of RNA polymerase (RNAP). The protein is DNA-directed RNA polymerase subunit epsilon of Streptococcus pneumoniae (strain P1031).